The sequence spans 814 residues: MAKTNSYKKVIAGTMTAAMVAGVVSPVAAAGKTFPDVPADHWGIDSINYLVEKGAVKGNDKGMFEPGKELTRAEAATMMAQILNLPIDKDAKPSFADSQGQWYTPFIAAVEKAGVIKGTGNGFEPNGKIDRVSMASLLVEAYKLDTKVNGTPATKFKDLETLNWGKEKANILVELGISVGTGDQWEPKKTVTKAEAAQFIAKTDKQFGTEAAKVESAKAVTTQKVEVKFSKAVEKLTKEDIKVTNKANNDKVLVKEVTLSEDKKSATVELYSNLAAKQTYTVDVNKVGKTEVAVGSLEAKTIEMADQTVVADEPTALQFTVKDENGTEVVSPEGIEFVTPAAEKINAKGEITLAKGTSTTVKAVYKKDGKVVAESKEVKVSAEGAAVASISNWTVAEQNKADFTSKDFKQNNKVYEGDNAYVQVELKDQFNAVTTGKVEYESLNTEVAVVDKATGKVTVLSAGKAPVKVTVKDSKGKELVSKTVEIEAFAQKAMKEIKLEKTNVALSTKDVTDLKVKAPVLDQYGKEFTAPVTVKVLDKDGKELKEQKLEAKYVNKELVLNAAGQEAGNYTVVLTAKSGEKEAKATLALELKAPGAFSKFEVRGLEKELDKYVTEENQKNAMTVSVLPVDANGLVLKGAEAAELKVTTTNKEGKEVDATDAQVTVQNNSVITVGQGAKAGETYKVTVVLDGKLITTHSFKVVDTAPTAKGLAVEFTSTSLKEVAPNADLKAALLNILSVDGVPATTAKATVSNVEFVSADTNVVAENGTVGAKGATSIYVKNLTVVKDGKEQKVEFDKAVQVAVSIKEAKPATK.

The N-terminal stretch at 1–29 is a signal peptide; it reads MAKTNSYKKVIAGTMTAAMVAGVVSPVAA. 3 SLH domains span residues 30 to 93, 94 to 150, and 152 to 214; these read AGKT…DAKP, SFAD…KVNG, and PATK…AAKV. Positions 403–479 constitute a BIG2 domain; it reads FTSKDFKQNN…TVKDSKGKEL (77 aa).

In terms of processing, probably glycosylated.

The protein resides in the secreted. It localises to the cell wall. The protein localises to the S-layer. Functionally, the S-layer is a paracrystalline mono-layered assembly of proteins which coat the surface of bacteria. In Bacillus anthracis, this protein is S-layer protein sap (sap).